The primary structure comprises 578 residues: Glutathione hydrolase 2 (578 aa).

An N-terminal signal peptide occupies residues 1 to 26 (MNSFMSLVRTATIALLLIAFLQNANA). A glycan (N-linked (GlcNAc...) asparagine) is linked at Asn94. Arg103 serves as a coordination point for L-glutamate. Residues Asn176 and Asn227 are each glycosylated (N-linked (GlcNAc...) asparagine). Residue Thr374 is the Nucleophile of the active site. L-glutamate is bound by residues Thr392, Asn394, Glu413, Asp416, 446-447 (SS), and 467-468 (GG). An N-linked (GlcNAc...) asparagine glycan is attached at Asn511.

The protein belongs to the gamma-glutamyltransferase family. In terms of tissue distribution, expressed in roots, immature trichomes and pollen. In developing siliques, specifically expressed in the embryo, endosperm, outer integument and a small portion of the funiculus.

The protein localises to the secreted. Its subcellular location is the extracellular space. The protein resides in the apoplast. The catalysed reaction is an N-terminal (5-L-glutamyl)-[peptide] + an alpha-amino acid = 5-L-glutamyl amino acid + an N-terminal L-alpha-aminoacyl-[peptide]. It carries out the reaction glutathione + H2O = L-cysteinylglycine + L-glutamate. The enzyme catalyses an S-substituted glutathione + H2O = an S-substituted L-cysteinylglycine + L-glutamate. Its pathway is sulfur metabolism; glutathione metabolism. In terms of biological role, may be required for glutathione transport into developing seeds. The polypeptide is Glutathione hydrolase 2 (GGT2) (Arabidopsis thaliana (Mouse-ear cress)).